The chain runs to 1345 residues: DNA-directed RNA polymerase subunit beta' (1345 aa).

Residues Cys-60, Cys-62, Cys-75, and Cys-78 each coordinate Zn(2+). Residues Asp-536, Asp-538, and Asp-540 each contribute to the Mg(2+) site. The Zn(2+) site is built by Cys-895, Cys-974, Cys-981, and Cys-984.

It belongs to the RNA polymerase beta' chain family. As to quaternary structure, the RNAP catalytic core consists of 2 alpha, 1 beta, 1 beta' and 1 omega subunit. When a sigma factor is associated with the core the holoenzyme is formed, which can initiate transcription. It depends on Mg(2+) as a cofactor. The cofactor is Zn(2+).

The catalysed reaction is RNA(n) + a ribonucleoside 5'-triphosphate = RNA(n+1) + diphosphate. In terms of biological role, DNA-dependent RNA polymerase catalyzes the transcription of DNA into RNA using the four ribonucleoside triphosphates as substrates. This chain is DNA-directed RNA polymerase subunit beta', found in Bifidobacterium longum (strain DJO10A).